Consider the following 239-residue polypeptide: Phosphoribosylaminoimidazole-succinocarboxamide synthase (239 aa).

Belongs to the SAICAR synthetase family.

The catalysed reaction is 5-amino-1-(5-phospho-D-ribosyl)imidazole-4-carboxylate + L-aspartate + ATP = (2S)-2-[5-amino-1-(5-phospho-beta-D-ribosyl)imidazole-4-carboxamido]succinate + ADP + phosphate + 2 H(+). The protein operates within purine metabolism; IMP biosynthesis via de novo pathway; 5-amino-1-(5-phospho-D-ribosyl)imidazole-4-carboxamide from 5-amino-1-(5-phospho-D-ribosyl)imidazole-4-carboxylate: step 1/2. The chain is Phosphoribosylaminoimidazole-succinocarboxamide synthase from Bacillus cereus (strain B4264).